Reading from the N-terminus, the 516-residue chain is MATSLQSVIVLDFGSQYTQLIARRIREIGIYSEIFPYHTKAETIRAHQPKAIILSGGPNSVYDEKAFMPDPEVFSLGVPVLGICYGLQAIAKHFGGNVESSSKQEFGRAKMLVNHDESESLLFRDIPDSDVWMSHGDKVTQLPEGFRVTASTANAEVCAIESFGSKAALKVYGLQFHPEVQHSLYGKQLLSNFLIDIAGITPDWSPKSFIQHQIEEIKRVAGDSTVVCGISGGVDSTVAAVLVSKAIGDKLHCVFVDNGLLRKDEAVKVMEFLKPLGLNISLVDASDLFLGRLKGVASPEKKRKIIGRTFIQVFEKNIHDEKFLVQGTLYPDVIESVSVKGPSETIKSHHNVGGLPKRMKLKLIEPLRELFKDEVRAVGRELGIAEDILMRHPFPGPGLAVRVLGSLTRERLDVLRDADQIFIDELKSSGLYSKVWQAFSVLLPVQSVGVMGDKRTYENVLALRAVESTDGMTADWAHLPHDFLAKVSNRIINEVRGINRVVYDISSKPPATIEWE.

Residues 7-203 (SVIVLDFGSQ…LIDIAGITPD (197 aa)) enclose the Glutamine amidotransferase type-1 domain. The active-site Nucleophile is Cys84. Active-site residues include His177 and Glu179. In terms of domain architecture, GMPS ATP-PPase spans 204 to 391 (WSPKSFIQHQ…LGIAEDILMR (188 aa)). Residue 231–237 (SGGVDST) coordinates ATP.

Homodimer.

It catalyses the reaction XMP + L-glutamine + ATP + H2O = GMP + L-glutamate + AMP + diphosphate + 2 H(+). The protein operates within purine metabolism; GMP biosynthesis; GMP from XMP (L-Gln route): step 1/1. In terms of biological role, catalyzes the synthesis of GMP from XMP. The polypeptide is GMP synthase [glutamine-hydrolyzing] (Chlorobaculum tepidum (strain ATCC 49652 / DSM 12025 / NBRC 103806 / TLS) (Chlorobium tepidum)).